A 179-amino-acid chain; its full sequence is MQRKPSQKSATDKLFNHRINEKITGVSRVRLVSDDGVAIVSFEEALRKAKEENLDLVEVSADQELHVCKIIDYGKYKFELLKKNKEAKKKQHVINVKEIKIRPRIESHDYEIKKKHAQEFLGKGDKVKVSLRFRGREMMHSDLGMKVVYRMIEDLKEYGLAERDPIQDGKQIVVIINPK.

It belongs to the IF-3 family. As to quaternary structure, monomer.

It localises to the cytoplasm. Functionally, IF-3 binds to the 30S ribosomal subunit and shifts the equilibrium between 70S ribosomes and their 50S and 30S subunits in favor of the free subunits, thus enhancing the availability of 30S subunits on which protein synthesis initiation begins. In Leptospira borgpetersenii serovar Hardjo-bovis (strain L550), this protein is Translation initiation factor IF-3.